We begin with the raw amino-acid sequence, 308 residues long: Acyl transferase (308 aa).

Catalysis depends on charge relay system residues Ser-116, Asp-213, and His-243.

The protein belongs to the LuxD family.

The protein operates within lipid metabolism; fatty acid reduction for biolumincescence. Acyl transferase is part of the fatty acid reductase system required for aldehyde biosynthesis; it produces fatty acids for the luminescent reaction. The sequence is that of Acyl transferase from Shewanella hanedai (Alteromonas hanedai).